A 485-amino-acid polypeptide reads, in one-letter code: Membrane-bound lytic murein transglycosylase F (485 aa).

Positions Met-1–Glu-29 are cleaved as a signal peptide. Residues Lys-30–Val-267 form a non-LT domain region. Residues Asp-268 to Met-485 form an LT domain region. Glu-314 is an active-site residue. The disordered stretch occupies residues Glu-465–Met-485. Positions Asn-474 to Met-485 are enriched in basic and acidic residues.

This sequence in the N-terminal section; belongs to the bacterial solute-binding protein 3 family. It in the C-terminal section; belongs to the transglycosylase Slt family.

It localises to the cell outer membrane. It carries out the reaction Exolytic cleavage of the (1-&gt;4)-beta-glycosidic linkage between N-acetylmuramic acid (MurNAc) and N-acetylglucosamine (GlcNAc) residues in peptidoglycan, from either the reducing or the non-reducing ends of the peptidoglycan chains, with concomitant formation of a 1,6-anhydrobond in the MurNAc residue.. Murein-degrading enzyme that degrades murein glycan strands and insoluble, high-molecular weight murein sacculi, with the concomitant formation of a 1,6-anhydromuramoyl product. Lytic transglycosylases (LTs) play an integral role in the metabolism of the peptidoglycan (PG) sacculus. Their lytic action creates space within the PG sacculus to allow for its expansion as well as for the insertion of various structures such as secretion systems and flagella. The chain is Membrane-bound lytic murein transglycosylase F from Pseudomonas putida (strain ATCC 47054 / DSM 6125 / CFBP 8728 / NCIMB 11950 / KT2440).